The sequence spans 659 residues: Delta(6)-protoilludene synthase (659 aa).

Aspartate 91, asparagine 227, serine 231, and glutamate 235 together coordinate Mg(2+). The DDXXD motif signature appears at 91–95; sequence DEHTD. Residues arginine 316 and tyrosine 317 each coordinate (2E,6E)-farnesyl diphosphate. The interval 528–586 is disordered; it reads PQFSKTSGAPNGAHTPTTTNGSIKSNGFVSGDTNGHANGNGHVQTRSSTPSSSSSSTSS. Over residues 530–573 the composition is skewed to polar residues; it reads FSKTSGAPNGAHTPTTTNGSIKSNGFVSGDTNGHANGNGHVQTR. A compositionally biased stretch (low complexity) spans 574–586; that stretch reads SSTPSSSSSSTSS.

It belongs to the terpene synthase family. Mg(2+) serves as cofactor.

It catalyses the reaction (2E,6E)-farnesyl diphosphate = Delta(6)-protoilludene + diphosphate. Terpene cyclase that catalyzes the cyclization of farnesyl diphosphate (FPP) to delta(6)-protoilludene. This chain is Delta(6)-protoilludene synthase, found in Cyclocybe aegerita (Black poplar mushroom).